Here is a 177-residue protein sequence, read N- to C-terminus: Protein C (177 aa).

A compositionally biased stretch (polar residues) spans 1–10 (MSTKAWNASR). The segment at 1–37 (MSTKAWNASRLSGPDPSTPWSLKKPLQHGSRPPKGKR) is disordered.

Belongs to the morbillivirus protein C family.

The chain is Protein C (P/V/C) from Bos indicus (Zebu).